Reading from the N-terminus, the 412-residue chain is Multifunctional CCA protein (412 aa).

Positions 8 and 11 each coordinate ATP. CTP is bound by residues G8 and R11. D21 and D23 together coordinate Mg(2+). The ATP site is built by R91, R137, and R140. CTP contacts are provided by R91, R137, and R140. Positions 228 to 329 constitute an HD domain; that stretch reads TGIHTLMTLS…VKLFDSIDAW (102 aa).

This sequence belongs to the tRNA nucleotidyltransferase/poly(A) polymerase family. Bacterial CCA-adding enzyme type 1 subfamily. As to quaternary structure, monomer. Can also form homodimers and oligomers. Requires Mg(2+) as cofactor. It depends on Ni(2+) as a cofactor.

It carries out the reaction a tRNA precursor + 2 CTP + ATP = a tRNA with a 3' CCA end + 3 diphosphate. The catalysed reaction is a tRNA with a 3' CCA end + 2 CTP + ATP = a tRNA with a 3' CCACCA end + 3 diphosphate. Catalyzes the addition and repair of the essential 3'-terminal CCA sequence in tRNAs without using a nucleic acid template. Adds these three nucleotides in the order of C, C, and A to the tRNA nucleotide-73, using CTP and ATP as substrates and producing inorganic pyrophosphate. tRNA 3'-terminal CCA addition is required both for tRNA processing and repair. Also involved in tRNA surveillance by mediating tandem CCA addition to generate a CCACCA at the 3' terminus of unstable tRNAs. While stable tRNAs receive only 3'-terminal CCA, unstable tRNAs are marked with CCACCA and rapidly degraded. The protein is Multifunctional CCA protein of Escherichia coli (strain SMS-3-5 / SECEC).